A 342-amino-acid chain; its full sequence is Oxygen-dependent coproporphyrinogen-III oxidase (342 aa).

S98 is a binding site for substrate. Residues H102 and H112 each coordinate a divalent metal cation. The Proton donor role is filled by H112. Position 114–116 (114–116 (NYR)) interacts with substrate. A divalent metal cation-binding residues include H146 and H176. The tract at residues 266 to 301 (YVEFNLVWDRGTIFGLQTNGRTESILMSLPPLARWE) is important for dimerization.

This sequence belongs to the aerobic coproporphyrinogen-III oxidase family. Homodimer. It depends on a divalent metal cation as a cofactor.

The protein resides in the cytoplasm. It carries out the reaction coproporphyrinogen III + O2 + 2 H(+) = protoporphyrinogen IX + 2 CO2 + 2 H2O. It functions in the pathway porphyrin-containing compound metabolism; protoporphyrin-IX biosynthesis; protoporphyrinogen-IX from coproporphyrinogen-III (O2 route): step 1/1. Functionally, involved in the heme and chlorophyll biosynthesis. Catalyzes the aerobic oxidative decarboxylation of propionate groups of rings A and B of coproporphyrinogen-III to yield the vinyl groups in protoporphyrinogen-IX. The sequence is that of Oxygen-dependent coproporphyrinogen-III oxidase from Prochlorococcus marinus (strain MIT 9312).